A 255-amino-acid chain; its full sequence is Wtf element wtf15 (255 aa).

Residues 19–78 form a disordered region; it reads KAGHEIDLEGSPPSEHNSEEKSTLPSNSDILTSANPVSQASETPDHSIESNTGSTQSPTS. Composition is skewed to polar residues over residues 41–60 and 67–78; these read TLPS…QASE and ESNTGSTQSPTS. A run of 4 helical transmembrane segments spans residues 85–105, 112–132, 162–182, and 187–208; these read FSFC…CVLP, FLIA…SGSI, FLKT…LVLL, and WGWK…SFCL.

It belongs to the WTF family.

Its subcellular location is the spore membrane. May act in meiotic drive. This chain is Wtf element wtf15, found in Schizosaccharomyces pombe (strain 972 / ATCC 24843) (Fission yeast).